The chain runs to 295 residues: Nucleotide-binding protein RBAM_031990 (295 aa).

An ATP-binding site is contributed by 16 to 23 (GMSGAGKT). A GTP-binding site is contributed by 67-70 (DLRG).

Belongs to the RapZ-like family.

In terms of biological role, displays ATPase and GTPase activities. The protein is Nucleotide-binding protein RBAM_031990 of Bacillus velezensis (strain DSM 23117 / BGSC 10A6 / LMG 26770 / FZB42) (Bacillus amyloliquefaciens subsp. plantarum).